We begin with the raw amino-acid sequence, 625 residues long: Mesothelin (625 aa).

An N-terminal signal peptide occupies residues 1–35 (MALPTAQPLLGSCGSPICSRSFLLLLLSLGWLPLL). At S202 the chain carries Phosphoserine. A disulfide bond links C304 and C328. N-linked (GlcNAc...) asparagine glycosylation is found at N390, N488, and N517. A lipid anchor (GPI-anchor amidated serine) is attached at S600. The propeptide at 601–625 (SGAPLLGPGFVFAWIPALLSALRLS) is removed in mature form.

The protein belongs to the mesothelin family. As to quaternary structure, interacts with MUC16. In terms of processing, proteolytically cleaved by a furin-like convertase to generate megakaryocyte-potentiating factor (MPF), and the cleaved form of mesothelin. Specifically expressed in lung. Overexpressed in hereditary renal carcinoma developed by Eker rats.

It localises to the cell membrane. It is found in the golgi apparatus. The protein localises to the secreted. Its function is as follows. Membrane-anchored forms may play a role in cellular adhesion. Functionally, megakaryocyte-potentiating factor (MPF) may potentiate megakaryocyte colony formation. The polypeptide is Mesothelin (Msln) (Rattus norvegicus (Rat)).